Reading from the N-terminus, the 437-residue chain is Aspartokinase (437 aa).

Belongs to the aspartokinase family.

It carries out the reaction L-aspartate + ATP = 4-phospho-L-aspartate + ADP. It functions in the pathway amino-acid biosynthesis; L-lysine biosynthesis via DAP pathway; (S)-tetrahydrodipicolinate from L-aspartate: step 1/4. The protein operates within amino-acid biosynthesis; L-methionine biosynthesis via de novo pathway; L-homoserine from L-aspartate: step 1/3. It participates in amino-acid biosynthesis; L-threonine biosynthesis; L-threonine from L-aspartate: step 1/5. This is Aspartokinase (lysC) from Chlamydia muridarum (strain MoPn / Nigg).